A 178-amino-acid polypeptide reads, in one-letter code: Conodipine-P1 (178 aa).

The first 24 residues, 1 to 24 (MKLLAPVLWAMAALGVTWLVAVDS), serve as a signal peptide directing secretion. Pro38, Pro42, and Pro49 each carry 4-hydroxyproline; partial. His54 is an active-site residue. A propeptide spans 98 to 130 (KREVTSHRATSIAHSRLWKTALDQKSFLNRKAR) (interchain peptide). Pyrrolidone carboxylic acid is present on Gln131. Pro137 carries the 4-hydroxyproline; partial modification.

Belongs to the phospholipase A2 family. Group IX subfamily. In terms of assembly, heterodimer of an alpha and a beta chain; probably disulfide-linked. Ca(2+) is required as a cofactor. In terms of tissue distribution, expressed by the venom duct.

The protein resides in the secreted. It catalyses the reaction a 1,2-diacyl-sn-glycero-3-phosphocholine + H2O = a 1-acyl-sn-glycero-3-phosphocholine + a fatty acid + H(+). Catalyzes the calcium-dependent hydrolysis of the 2-acyl groups in 3-sn-phosphoglycerides. This is Conodipine-P1 from Conus purpurascens (Purple cone).